Consider the following 455-residue polypeptide: Probable glycine dehydrogenase (decarboxylating) subunit 1 (455 aa).

This sequence belongs to the GcvP family. N-terminal subunit subfamily. In terms of assembly, the glycine cleavage system is composed of four proteins: P, T, L and H. In this organism, the P 'protein' is a heterodimer of two subunits.

The enzyme catalyses N(6)-[(R)-lipoyl]-L-lysyl-[glycine-cleavage complex H protein] + glycine + H(+) = N(6)-[(R)-S(8)-aminomethyldihydrolipoyl]-L-lysyl-[glycine-cleavage complex H protein] + CO2. Functionally, the glycine cleavage system catalyzes the degradation of glycine. The P protein binds the alpha-amino group of glycine through its pyridoxal phosphate cofactor; CO(2) is released and the remaining methylamine moiety is then transferred to the lipoamide cofactor of the H protein. This Francisella tularensis subsp. mediasiatica (strain FSC147) protein is Probable glycine dehydrogenase (decarboxylating) subunit 1.